The primary structure comprises 262 residues: Trypsin theta (262 aa).

A signal peptide spans 1-19; sequence MHGLVVLLVCLAVGSAFAG. Positions 20-34 are cleaved as a propeptide — activation peptide; it reads TIGVSNADPFEREGR. Residues 35-260 enclose the Peptidase S1 domain; that stretch reads IVGGEDTTIR…LRKWILNASQ (226 aa). The cysteines at positions 61 and 77 are disulfide-linked. Catalysis depends on charge relay system residues H76 and D121. 2 cysteine pairs are disulfide-bonded: C186–C203 and C212–C236. S216 functions as the Charge relay system in the catalytic mechanism.

This sequence belongs to the peptidase S1 family.

The protein localises to the secreted. It localises to the extracellular space. The enzyme catalyses Preferential cleavage: Arg-|-Xaa, Lys-|-Xaa.. The chain is Trypsin theta (thetaTry) from Drosophila erecta (Fruit fly).